A 361-amino-acid polypeptide reads, in one-letter code: Glutamate 5-kinase (361 aa).

An ATP-binding site is contributed by Lys-7. Substrate contacts are provided by Ser-47, Asp-134, and Asn-146. ATP contacts are provided by residues 166–167 and 209–215; these read TD and TGGMTTK. A PUA domain is found at 274 to 345; the sequence is LGTLQLDEGA…EAIETQMSTN (72 aa).

This sequence belongs to the glutamate 5-kinase family.

Its subcellular location is the cytoplasm. It catalyses the reaction L-glutamate + ATP = L-glutamyl 5-phosphate + ADP. Its pathway is amino-acid biosynthesis; L-proline biosynthesis; L-glutamate 5-semialdehyde from L-glutamate: step 1/2. Catalyzes the transfer of a phosphate group to glutamate to form L-glutamate 5-phosphate. In Prochlorococcus marinus (strain MIT 9313), this protein is Glutamate 5-kinase.